A 43-amino-acid chain; its full sequence is Protein PsbN (43 aa).

Residues 7-27 (VAIFISGLLVSFTGYALYTAF) traverse the membrane as a helical segment.

It belongs to the PsbN family.

The protein resides in the plastid. Its subcellular location is the chloroplast thylakoid membrane. May play a role in photosystem I and II biogenesis. The sequence is that of Protein PsbN from Daucus carota (Wild carrot).